A 365-amino-acid polypeptide reads, in one-letter code: Ribosomal RNA large subunit methyltransferase F (365 aa).

Residues methionine 1–alanine 50 form a disordered region. Residues alanine 33–alanine 50 show a composition bias toward basic and acidic residues.

Belongs to the methyltransferase superfamily. METTL16/RlmF family.

It is found in the cytoplasm. The catalysed reaction is adenosine(1618) in 23S rRNA + S-adenosyl-L-methionine = N(6)-methyladenosine(1618) in 23S rRNA + S-adenosyl-L-homocysteine + H(+). In terms of biological role, specifically methylates the adenine in position 1618 of 23S rRNA. This chain is Ribosomal RNA large subunit methyltransferase F, found in Shewanella baltica (strain OS155 / ATCC BAA-1091).